The chain runs to 458 residues: Ammonium transporter Rh type B (458 aa).

The Cytoplasmic portion of the chain corresponds to 1 to 13; it reads MAGSPSRAAGRRL. The chain crosses the membrane as a helical span at residues 14-34; sequence QLPLLCLFLQGATAVLFAVFV. The Extracellular segment spans residues 35-61; sequence RYNHKTDAALWHRGNHSNADNEFYFRY. The N-linked (GlcNAc...) asparagine glycan is linked to Asn49. A helical transmembrane segment spans residues 62 to 82; sequence PSFQDVHAMVFVGFGFLMVFL. Topologically, residues 83-86 are cytoplasmic; that stretch reads QRYG. The chain crosses the membrane as a helical span at residues 87–107; sequence FSSVGFTFLLAAFALQWSTLV. Residues 108–124 are Extracellular-facing; it reads QGFLHSFHSGHIHVGVE. Residues 125 to 145 form a helical membrane-spanning segment; sequence SMINADFCAGAVLISFGAVLG. At 146 to 149 the chain is on the cytoplasmic side; that stretch reads KTGP. A helical membrane pass occupies residues 150–170; that stretch reads AQLLLMALLEVVLFGINEFVL. The Extracellular portion of the chain corresponds to 171–178; sequence LHLLGVRD. A helical membrane pass occupies residues 179-201; the sequence is AGGSMTIHTFGAYFGLVLSRVLY. The Cytoplasmic segment spans residues 202-219; sequence RPQLEKSKHRQGSVYHSD. The chain crosses the membrane as a helical span at residues 220–240; sequence LFAMIGTIFLWIFWPSFNSAL. The Extracellular portion of the chain corresponds to 241–251; it reads TALGAGQHRTA. A helical transmembrane segment spans residues 252–272; that stretch reads LNTYYSLAASTLGTFALSALV. The Cytoplasmic portion of the chain corresponds to 273-282; it reads GEDGRLDMVH. The chain crosses the membrane as a helical span at residues 283–303; sequence IQNAALAGGVVVGTSSEMMLT. A topological domain (extracellular) is located at residue Pro304. A helical transmembrane segment spans residues 305–325; the sequence is FGALAAGFLAGTVSTLGYKFF. The Cytoplasmic portion of the chain corresponds to 326 to 346; that stretch reads TPILESKFKVQDTCGVHNLHG. A helical transmembrane segment spans residues 347 to 367; sequence MPGVLGALLGVLVAGLATHEA. The Extracellular segment spans residues 368–393; that stretch reads YGDGLESVFPLIAEGQRSATSQAMLQ. A helical membrane pass occupies residues 394–414; the sequence is LFGLFVTLMFASVGGGLGGLL. Topologically, residues 415–458 are cytoplasmic; the sequence is LKLPFLDSPPDSQCYEDQVHWQVPGEHEDEAQRPLRVEEADTQA. The interaction with ANK3 stretch occupies residues 416 to 424; the sequence is KLPFLDSPP. Residues 429–432 carry the Basolateral sorting signal motif; sequence YEDQ. Residues 439–458 are disordered; it reads GEHEDEAQRPLRVEEADTQA. A compositionally biased stretch (basic and acidic residues) spans 444–458; sequence EAQRPLRVEEADTQA.

Belongs to the ammonium transporter (TC 2.A.49) family. Rh subfamily. Interacts (via C-terminus) with ANK2 and ANK3; required for targeting to the basolateral membrane. Post-translationally, N-glycosylated.

Its subcellular location is the cell membrane. It localises to the basolateral cell membrane. It catalyses the reaction NH4(+)(in) = NH4(+)(out). The catalysed reaction is methylamine(out) = methylamine(in). It carries out the reaction CO2(out) = CO2(in). Its function is as follows. Ammonium transporter involved in the maintenance of acid-base homeostasis. Transports ammonium and its related derivative methylammonium across the basolateral plasma membrane of epithelial cells likely contributing to renal transepithelial ammonia transport and ammonia metabolism. May transport either NH4(+) or NH3 ammonia species predominantly mediating an electrogenic NH4(+) transport. May act as a CO2 channel providing for renal acid secretion. The polypeptide is Ammonium transporter Rh type B (RHBG) (Macaca mulatta (Rhesus macaque)).